The chain runs to 662 residues: MRGAGPSPRHSPRALRPDPGPAMSFFRRKVKGKEQEKTLDVKSTKASVAVHSPQKSTKNHALLEAAGPSHVAINAISANMDSFSSSRTATLKKQPSHMEAAHFGDLGRSCLDYQTQETKSSLSKTLEQVLRDTVVLPYFLQFMELRRMEHLVKFWLEAESFHSTTWSRIRAHSLNTVKQSSLAEPVSPSKRHETPASSVTEALDRRLGDSSSAPLLVTQSEGTDLSSRTQNPQNHLLLSQEGHSARSLHREVARTGSHQIPTDSQDSSSRLAVGSRNSCSSPLRELSEKLMKSIEQDAVNTFTKYISPDAAKPIPITEAMRNDIIAKICGEDGQVDPNCFVLAQAVVFSAMEQEHFSEFLRSHHFCKYQIEVLTSGTVYLADILFCESALFYFSEYMEKEDAVNILQFWLAADNFQSQLAAKKGQYDGQEAQNDAMILYDKYFSLQATHPLGFDDVVRLEIESNICREGGPLPNCFTTPLRQAWTTMEKVFLPGFLSSNLYYKYLNDLIHSVRGDEFLGGNVSLAAHGSVCLPEESHSGGSDGSTAQSSVKKASIKILKNFDEAIIVDAASLDPESLYQRTYAGKMSFGRVSDLGQFIRESEPEPDVKKSKGFMFSQAMKKWVQGNTDEAQEELAWKIAKMIVSDVMQQAHHDQPLEKSTKL.

Residues 1–28 (MRGAGPSPRHSPRALRPDPGPAMSFFRR) constitute a mitochondrion transit peptide. Disordered regions lie at residues 1–55 (MRGA…SPQK), 178–205 (KQSSLAEPVSPSKRHETPASSVTEALDR), and 242–280 (GHSARSLHREVARTGSHQIPTDSQDSSSRLAVGSRNSCS). Residues 32 to 43 (GKEQEKTLDVKS) are compositionally biased toward basic and acidic residues. Serine 52 and serine 189 each carry phosphoserine. RGS domains are found at residues 125 to 369 (TLEQ…CKYQ) and 379 to 505 (YLAD…YKYL). The span at 256-280 (GSHQIPTDSQDSSSRLAVGSRNSCS) shows a compositional bias: polar residues. Phosphoserine is present on serine 281. A PKA-RII subunit binding region spans residues 634-647 (LAWKIAKMIVSDVM).

As to expression, highly expressed in testis, kidney and lung, followed by brain, skeletal muscle, liver, spleen and heart. Also expressed in brown adipose tissue and pancreas.

Its subcellular location is the mitochondrion. The protein localises to the membrane. It is found in the cytoplasm. Its function is as follows. Differentially targeted protein that binds to type I and II regulatory subunits of protein kinase A and anchors them to the mitochondria or the plasma membrane. Although the physiological relevance between PKA and AKAPS with mitochondria is not fully understood, one idea is that BAD, a proapoptotic member, is phosphorylated and inactivated by mitochondria-anchored PKA. It cannot be excluded too that it may facilitate PKA as well as G protein signal transduction, by acting as an adapter for assembling multiprotein complexes. With its RGS domain, it could lead to the interaction to G-alpha proteins, providing a link between the signaling machinery and the downstream kinase. The sequence is that of A-kinase anchor protein 10, mitochondrial (Akap10) from Mus musculus (Mouse).